The primary structure comprises 284 residues: Aquaporin NIP1-1 (284 aa).

Residues Met1 to Asn12 are compositionally biased toward polar residues. Positions Met1–Gln28 are disordered. Residues His17–Gln28 are compositionally biased toward basic and acidic residues. The next 2 membrane-spanning stretches (helical) occupy residues Ile50 to Ile70 and Ile78 to Val98. The NPA 1 signature appears at Asn107–Ala109. 3 consecutive transmembrane segments (helical) span residues Ala129–Gly149, Ser166–Thr186, and Leu194–Ser214. The NPA 2 motif lies at Asn219–Ala221. Residues Ile236 to Ile256 traverse the membrane as a helical segment.

The protein belongs to the MIP/aquaporin (TC 1.A.8) family. NIP (TC 1.A.8.12) subfamily. As to expression, expressed in leaves and at lower levels in roots and anthers.

The protein resides in the membrane. In terms of biological role, aquaporins facilitate the transport of water and small neutral solutes across cell membranes. The sequence is that of Aquaporin NIP1-1 (NIP1-1) from Oryza sativa subsp. japonica (Rice).